The primary structure comprises 149 residues: uncharacterized protein (149 aa).

Helical transmembrane passes span 39–61 (VPLG…LIIG), 82–104 (VFGY…GAIL), and 119–141 (WMMM…SIYL).

This sequence to M.pneumoniae MPN_090.

It is found in the cell membrane. This is an uncharacterized protein from Mycoplasma pneumoniae (strain ATCC 29342 / M129 / Subtype 1) (Mycoplasmoides pneumoniae).